The chain runs to 413 residues: Phosphopentomutase (413 aa).

Mn(2+) is bound by residues Asp-11, Asp-306, His-311, Asp-347, His-348, and His-359.

The protein belongs to the phosphopentomutase family. The cofactor is Mn(2+).

The protein resides in the cytoplasm. It catalyses the reaction 2-deoxy-alpha-D-ribose 1-phosphate = 2-deoxy-D-ribose 5-phosphate. The enzyme catalyses alpha-D-ribose 1-phosphate = D-ribose 5-phosphate. It functions in the pathway carbohydrate degradation; 2-deoxy-D-ribose 1-phosphate degradation; D-glyceraldehyde 3-phosphate and acetaldehyde from 2-deoxy-alpha-D-ribose 1-phosphate: step 1/2. Isomerase that catalyzes the conversion of deoxy-ribose 1-phosphate (dRib-1-P) and ribose 1-phosphate (Rib-1-P) to deoxy-ribose 5-phosphate (dRib-5-P) and ribose 5-phosphate (Rib-5-P), respectively. The polypeptide is Phosphopentomutase (Helicobacter acinonychis (strain Sheeba)).